Reading from the N-terminus, the 363-residue chain is MSHNTFGHLFRVTTWGESHGPALGCVIDGCPPGLSLDAPFIQQFLDKRRPGTSRFVTQRQEADEVKILSGVFEDDRTDGPVTTGTPISLMIENTDQRSKDYREIRDRYRPGHADYAYDQKYGVRDYRGGGRSSARETAARVAAGAVARRVLGEDILLRGAVVQIGPHMIDPKNWDWAETQNNPFWCPDAKMAAQWETYLDSVRKSGSSTGAIVEVHASGVPAGWGAPVYGKLDAELAGAMMSINAAKGVEIGAGFAAASMSGEENADEMRAGNDAPRFLANNNGGVAGGISTGQDIVVRIAIKPTSSILNEVKSITRDGEEVDVRTIGRHDPCVGIRAVPVAEAMLACVLADAKLRHRGQTGH.

NADP(+)-binding residues include Arg48 and Arg54. FMN-binding positions include 131-133 (RSS), 244-245 (NA), Gly288, 303-307 (KPTSS), and Arg329.

The protein belongs to the chorismate synthase family. As to quaternary structure, homotetramer. FMNH2 serves as cofactor.

It carries out the reaction 5-O-(1-carboxyvinyl)-3-phosphoshikimate = chorismate + phosphate. The protein operates within metabolic intermediate biosynthesis; chorismate biosynthesis; chorismate from D-erythrose 4-phosphate and phosphoenolpyruvate: step 7/7. In terms of biological role, catalyzes the anti-1,4-elimination of the C-3 phosphate and the C-6 proR hydrogen from 5-enolpyruvylshikimate-3-phosphate (EPSP) to yield chorismate, which is the branch point compound that serves as the starting substrate for the three terminal pathways of aromatic amino acid biosynthesis. This reaction introduces a second double bond into the aromatic ring system. This chain is Chorismate synthase, found in Hyphomonas neptunium (strain ATCC 15444).